A 277-amino-acid chain; its full sequence is Multiple sugar-binding transport system permease protein MsmG (277 aa).

A run of 6 helical transmembrane segments spans residues 13-33 (YVLLTVGGILILIPLMVTVFS), 74-94 (VITVLSVLVVMLFIPAAAYSI), 110-130 (LLILGIFVPFQVIMIPITVMM), 141-161 (LIILYLTYAIPQTLFLYVGYI), 198-218 (TTLIINALWFWNDFMLPLLIL), and 243-263 (GPSFASYIVGIITITIVYLIF). Residues 69–263 (FWNSTVITVL…ITITIVYLIF (195 aa)) form the ABC transmembrane type-1 domain.

This sequence belongs to the binding-protein-dependent transport system permease family. MalFG subfamily.

The protein resides in the cell membrane. Functionally, involved in a binding protein-dependent transport system responsible for the uptake of melibiose, raffinose and isomaltotriose. This is Multiple sugar-binding transport system permease protein MsmG (msmG) from Streptococcus mutans serotype c (strain ATCC 700610 / UA159).